Consider the following 76-residue polypeptide: MAETDPKTMQDITLVVETLLQQMQDKFQIMSDQIIGRIDDMSSRIDDLEKNIADLMTQAGVEELDPENKIPTAQKS.

It belongs to the HSBP1 family. Homohexamer. Associates with heptad repeats of HSF1 trimers and probably also HSF1 monomers, and with HSP70. Association with HSF1 trimers and HSP70 coincides with attenuation of heat shock response and the conversion of HSF1 trimer to monomer.

It is found in the nucleus. Functionally, negative regulator of the heat shock response. Negatively affects HSF1 DNA-binding activity. May have a role in the suppression of the activation of the stress response during the aging process. The polypeptide is Heat shock factor-binding protein 1 (Hsbp1) (Mus musculus (Mouse)).